The following is a 655-amino-acid chain: Import motor subunit, mitochondrial (655 aa).

The N-terminal 23 residues, 1–23 (MLAAKNILNRSSLSSSFRIATRL), are a transit peptide targeting the mitochondrion. Residue Thr-330 is modified to Phosphothreonine. Positions 629 to 655 (EQLYKNDSNNNNNNNNGNNAESDETKQ) are disordered. Low complexity predominate over residues 637–647 (NNNNNNNNGNN).

It belongs to the heat shock protein 70 family. Component of the PAM complex, at least composed of SSC1 (mtHsp70), MGE1, TIM44, PAM16/TIM16, PAM17 and PAM18/TIM14. In the complex, SSC1 interacts directly with PAM18 and TIM44. Interacts with NAP1. Component of endonuclease SceI (endo.SceI), which is a heterodimer of ENS2 and SSC1.

Its subcellular location is the mitochondrion matrix. It carries out the reaction ATP + H2O = ADP + phosphate + H(+). Essential component of the PAM complex, a complex required for the translocation of transit peptide-containing proteins from the inner membrane into the mitochondrial matrix in an ATP-dependent manner. Constitutes the ATP-driven core of the motor and binds the precursor preprotein. Required for the import of the processed frataxin homolog YFH1 into the mitochondrion. Functionally, acts as a non-catalytic component of endonuclease SceI (endo.SceI), which cleaves specifically at multiple sites on mitochondrial DNA and produces double-stranded breaks. SSC1 confers broader sequence specificity, greater stability, and higher activity on the catalytic subunit. This is Import motor subunit, mitochondrial from Saccharomyces cerevisiae (Baker's yeast).